Consider the following 298-residue polypeptide: Homoserine kinase (298 aa).

79 to 89 (PIARGLGSSGA) lines the ATP pocket.

This sequence belongs to the GHMP kinase family. Homoserine kinase subfamily.

Its subcellular location is the cytoplasm. The catalysed reaction is L-homoserine + ATP = O-phospho-L-homoserine + ADP + H(+). It participates in amino-acid biosynthesis; L-threonine biosynthesis; L-threonine from L-aspartate: step 4/5. In terms of biological role, catalyzes the ATP-dependent phosphorylation of L-homoserine to L-homoserine phosphate. In Pyrobaculum islandicum (strain DSM 4184 / JCM 9189 / GEO3), this protein is Homoserine kinase.